Reading from the N-terminus, the 20-residue chain is Chemoheterotroph-specific protein (20 aa).

The sequence is that of Chemoheterotroph-specific protein from Thiomonas delicata (Thiomonas cuprina).